The following is a 422-amino-acid chain: Putative nickel insertion protein (422 aa).

The protein belongs to the LarC family.

This is Putative nickel insertion protein from Synechocystis sp. (strain ATCC 27184 / PCC 6803 / Kazusa).